We begin with the raw amino-acid sequence, 91 residues long: Large ribosomal subunit protein bL31B-1 (91 aa).

Belongs to the bacterial ribosomal protein bL31 family. Type B subfamily. As to quaternary structure, part of the 50S ribosomal subunit.

The sequence is that of Large ribosomal subunit protein bL31B-1 from Streptomyces avermitilis (strain ATCC 31267 / DSM 46492 / JCM 5070 / NBRC 14893 / NCIMB 12804 / NRRL 8165 / MA-4680).